A 246-amino-acid chain; its full sequence is Acetoacetate decarboxylase (246 aa).

Lysine 116 acts as the Schiff-base intermediate with acetoacetate in catalysis.

It belongs to the ADC family.

The enzyme catalyses acetoacetate + H(+) = acetone + CO2. In terms of biological role, catalyzes the conversion of acetoacetate to acetone and carbon dioxide. This Burkholderia vietnamiensis (strain G4 / LMG 22486) (Burkholderia cepacia (strain R1808)) protein is Acetoacetate decarboxylase.